Here is a 246-residue protein sequence, read N- to C-terminus: MKKILAEITYDGSIYHGFQIQPTKPTIQGEIEKALMKINKKKVKIHSSGRTDKGVHAKKQIITFDININIQLNNLKKALNAILLKNSIKILKLKYMKNSFHPRFNAQKRKYSYRILNSNNYYPWEGYQAHYVNKKLNISNLNQMAKILIGNHDFTTFSCIKDKSKSKFRHIYLAKFKKRGKYIIFEIIGSSFLWKMVRSIIGTMLDIEIKNESISTFETILKSKNRNLARTTAPANALFLDKVYYE.

Asp52 functions as the Nucleophile in the catalytic mechanism. Substrate is bound at residue Tyr111.

It belongs to the tRNA pseudouridine synthase TruA family. As to quaternary structure, homodimer.

The catalysed reaction is uridine(38/39/40) in tRNA = pseudouridine(38/39/40) in tRNA. Its function is as follows. Formation of pseudouridine at positions 38, 39 and 40 in the anticodon stem and loop of transfer RNAs. This chain is tRNA pseudouridine synthase A, found in Borrelia garinii subsp. bavariensis (strain ATCC BAA-2496 / DSM 23469 / PBi) (Borreliella bavariensis).